The primary structure comprises 682 residues: Serine/threonine-protein kinase PLK2 (682 aa).

Residues 25–67 (ACGGDSKKKRPQQPSEDGQPQAQVTPAAPHHHHHHSHSGPEIS) are disordered. A compositionally biased stretch (polar residues) spans 36 to 48 (QQPSEDGQPQAQV). The region spanning 79–331 (YCRGKVLGKG…LDDIIRHDFF (253 aa)) is the Protein kinase domain. Residues 85–93 (LGKGGFAKC) and K108 each bind ATP. The active-site Proton acceptor is D202. At T236 the chain carries Phosphothreonine. A disordered region spans residues 403–432 (SITQQPSKHRADEEPQPPPTTVARSGTSAV). POLO box domains lie at 500–578 (WVTK…YMEE) and 598–682 (YLLQ…QRCN).

The protein belongs to the protein kinase superfamily. Ser/Thr protein kinase family. CDC5/Polo subfamily. In terms of assembly, interacts with NSF; causing NSF dissociation from GRIA2. Interacts with CIB1. Post-translationally, catalytic activity is enhanced by phosphorylation of Thr-236. Brain, lung and heart.

The protein localises to the cytoplasm. Its subcellular location is the cytoskeleton. It is found in the microtubule organizing center. The protein resides in the centrosome. It localises to the centriole. The protein localises to the cell projection. Its subcellular location is the dendrite. The catalysed reaction is L-seryl-[protein] + ATP = O-phospho-L-seryl-[protein] + ADP + H(+). It catalyses the reaction L-threonyl-[protein] + ATP = O-phospho-L-threonyl-[protein] + ADP + H(+). Activated by phosphorylation of Thr-236. Once activated, activity is stimulated by binding target proteins. In terms of biological role, tumor suppressor serine/threonine-protein kinase involved in synaptic plasticity, centriole duplication and G1/S phase transition. Polo-like kinases act by binding and phosphorylating proteins that are already phosphorylated on a specific motif recognized by the POLO box domains. Phosphorylates CPAP, NPM1, RAPGEF2, RASGRF1, SNCA, SIPA1L1 and SYNGAP1. Plays a key role in synaptic plasticity and memory by regulating the Ras and Rap protein signaling: required for overactivity-dependent spine remodeling by phosphorylating the Ras activator RASGRF1 and the Rap inhibitor SIPA1L1 leading to their degradation by the proteasome. Conversely, phosphorylates the Rap activator RAPGEF2 and the Ras inhibitor SYNGAP1, promoting their activity. Also regulates synaptic plasticity independently of kinase activity, via its interaction with NSF that disrupts the interaction between NSF and the GRIA2 subunit of AMPARs, leading to a rapid rundown of AMPAR-mediated current that occludes long term depression. Required for procentriole formation and centriole duplication by phosphorylating CPAP and NPM1, respectively. Its induction by p53/TP53 suggests that it may participate in the mitotic checkpoint following stress. In Mus musculus (Mouse), this protein is Serine/threonine-protein kinase PLK2 (Plk2).